We begin with the raw amino-acid sequence, 688 residues long: Elongation factor G (688 aa).

Positions 8-282 (EKFRNIGIMA…AVVDFMPSPL (275 aa)) constitute a tr-type G domain. GTP-binding positions include 17-24 (AHIDAGKT), 81-85 (DTPGH), and 135-138 (NKMD). The segment at 282-305 (LDIPPIKGTDPETGEETDRPADDN) is disordered.

The protein belongs to the TRAFAC class translation factor GTPase superfamily. Classic translation factor GTPase family. EF-G/EF-2 subfamily.

Its subcellular location is the cytoplasm. Functionally, catalyzes the GTP-dependent ribosomal translocation step during translation elongation. During this step, the ribosome changes from the pre-translocational (PRE) to the post-translocational (POST) state as the newly formed A-site-bound peptidyl-tRNA and P-site-bound deacylated tRNA move to the P and E sites, respectively. Catalyzes the coordinated movement of the two tRNA molecules, the mRNA and conformational changes in the ribosome. The chain is Elongation factor G from Clostridium kluyveri (strain NBRC 12016).